Reading from the N-terminus, the 213-residue chain is Uridine kinase (213 aa).

14–21 lines the ATP pocket; sequence GASASGKS.

This sequence belongs to the uridine kinase family.

The protein resides in the cytoplasm. It catalyses the reaction uridine + ATP = UMP + ADP + H(+). The enzyme catalyses cytidine + ATP = CMP + ADP + H(+). It participates in pyrimidine metabolism; CTP biosynthesis via salvage pathway; CTP from cytidine: step 1/3. It functions in the pathway pyrimidine metabolism; UMP biosynthesis via salvage pathway; UMP from uridine: step 1/1. The sequence is that of Uridine kinase from Vibrio atlanticus (strain LGP32) (Vibrio splendidus (strain Mel32)).